Consider the following 311-residue polypeptide: Glycosyltransferase 6 domain-containing protein 1 (311 aa).

The Cytoplasmic portion of the chain corresponds to 1 to 5; it reads MKAKG. The helical; Signal-anchor for type II membrane protein transmembrane segment at 6–26 threads the bilayer; that stretch reads RILLLTSCLFLLLLLLAKIHL. At 27–311 the chain is on the lumenal side; sequence RNHQEEELPL…KVAHYPTDDL (285 aa). Asn77 carries an N-linked (GlcNAc...) asparagine glycan. Substrate-binding positions include 85–90, 176–178, and 198–201; these read FAVSSF, SVN, and HAWW. Glu266 (nucleophile) is an active-site residue.

Belongs to the glycosyltransferase 6 family. The cofactor is Mn(2+).

Its subcellular location is the membrane. The protein is Glycosyltransferase 6 domain-containing protein 1 (Glt6d1) of Rattus norvegicus (Rat).